The sequence spans 519 residues: ATP synthase subunit alpha 2 (519 aa).

Residue 179–186 participates in ATP binding; that stretch reads GDRQTGKT.

It belongs to the ATPase alpha/beta chains family. In terms of assembly, F-type ATPases have 2 components, CF(1) - the catalytic core - and CF(0) - the membrane proton channel. CF(1) has five subunits: alpha(3), beta(3), gamma(1), delta(1), epsilon(1). CF(0) has three main subunits: a(1), b(2) and c(9-12). The alpha and beta chains form an alternating ring which encloses part of the gamma chain. CF(1) is attached to CF(0) by a central stalk formed by the gamma and epsilon chains, while a peripheral stalk is formed by the delta and b chains.

It is found in the cell inner membrane. It carries out the reaction ATP + H2O + 4 H(+)(in) = ADP + phosphate + 5 H(+)(out). Its function is as follows. Produces ATP from ADP in the presence of a proton gradient across the membrane. The alpha chain is a regulatory subunit. The polypeptide is ATP synthase subunit alpha 2 (Syntrophus aciditrophicus (strain SB)).